Reading from the N-terminus, the 230-residue chain is Isoprenyl transferase (230 aa).

D14 is a catalytic residue. Residue D14 coordinates Mg(2+). Substrate contacts are provided by residues 15–18 (GNGR), W19, R27, H31, and 59–61 (STE). N62 serves as the catalytic Proton acceptor. Substrate contacts are provided by residues W63, R65, R175, and 181-183 (RIS). E194 lines the Mg(2+) pocket.

This sequence belongs to the UPP synthase family. In terms of assembly, homodimer. Mg(2+) serves as cofactor.

Catalyzes the condensation of isopentenyl diphosphate (IPP) with allylic pyrophosphates generating different type of terpenoids. The polypeptide is Isoprenyl transferase (Fusobacterium nucleatum subsp. nucleatum (strain ATCC 25586 / DSM 15643 / BCRC 10681 / CIP 101130 / JCM 8532 / KCTC 2640 / LMG 13131 / VPI 4355)).